A 425-amino-acid chain; its full sequence is Serine--tRNA ligase (425 aa).

Residue 230 to 232 participates in L-serine binding; that stretch reads TSE. ATP-binding positions include 261–263 and V277; that span reads RRE. E284 serves as a coordination point for L-serine. 348–351 is a binding site for ATP; that stretch reads ELTS. Position 382 (T382) interacts with L-serine.

It belongs to the class-II aminoacyl-tRNA synthetase family. Type-1 seryl-tRNA synthetase subfamily. As to quaternary structure, homodimer. The tRNA molecule binds across the dimer.

Its subcellular location is the cytoplasm. It carries out the reaction tRNA(Ser) + L-serine + ATP = L-seryl-tRNA(Ser) + AMP + diphosphate + H(+). The catalysed reaction is tRNA(Sec) + L-serine + ATP = L-seryl-tRNA(Sec) + AMP + diphosphate + H(+). It participates in aminoacyl-tRNA biosynthesis; selenocysteinyl-tRNA(Sec) biosynthesis; L-seryl-tRNA(Sec) from L-serine and tRNA(Sec): step 1/1. Catalyzes the attachment of serine to tRNA(Ser). Is also able to aminoacylate tRNA(Sec) with serine, to form the misacylated tRNA L-seryl-tRNA(Sec), which will be further converted into selenocysteinyl-tRNA(Sec). The protein is Serine--tRNA ligase of Streptomyces coelicolor (strain ATCC BAA-471 / A3(2) / M145).